Consider the following 105-residue polypeptide: MQRHESGNTESNVVHPAELIVYSLLSNDLDGIYQSINDLRESQALLILMLRKIKNSLKEETQLLYDKSNWKDDNERLDSLRKRVDSLKSRFQSLKLRSDKLEQRE.

The stretch at 70 to 105 forms a coiled coil; it reads WKDDNERLDSLRKRVDSLKSRFQSLKLRSDKLEQRE.

This sequence belongs to the SNAPIN family. As to quaternary structure, component of the biogenesis of lysosome-related organelles complex-1 (BLOC-1).

It localises to the endosome. Functionally, component of the biogenesis of lysosome-related organelles complex-1 (BLOC-1), a complex involved in endosomal cargo sorting. This chain is Biogenesis of lysosome-related organelles complex 1 subunit SNN1 (SNN1), found in Zygosaccharomyces rouxii (strain ATCC 2623 / CBS 732 / NBRC 1130 / NCYC 568 / NRRL Y-229).